Reading from the N-terminus, the 139-residue chain is Mannose-specific lectin (139 aa).

A Bulb-type lectin domain is found at 1 to 109 (DNILYSGETL…ARWATGTNIH (109 aa)). Alpha-D-mannopyranose is bound by residues Q26, D28, N30, Y34, D37, K38, W41, A42, N44, Q57, D59, N61, Y65, I72, W73, N76, N83, Q89, D91, N93, Y97, and W102. C29 and C52 form a disulfide bridge.

Homotetramer; antiparallel. As to expression, detected in bulbs (at protein level).

The protein resides in the secreted. Functionally, mannose-specific lectin. Displays antiviral activity and therefore may contribute to defense against infections. Shows agglutinating activity towards rabbit erythrocytes. The protein is Mannose-specific lectin of Narcissus tazetta (Cream narcissus).